We begin with the raw amino-acid sequence, 83 residues long: MSSGGLLLLLGLLTLWAELTPVSSKDHPEFCELPADSGPCRGILHAFYYHPVHRTCLEFIYGGCYGNANNFKTIDECEPPCAA.

A signal peptide spans 1-24 (MSSGGLLLLLGLLTLWAELTPVSS). The region spanning 31–81 (CELPADSGPCRGILHAFYYHPVHRTCLEFIYGGCYGNANNFKTIDECEPPC) is the BPTI/Kunitz inhibitor domain. 3 disulfides stabilise this stretch: Cys-31-Cys-81, Cys-40-Cys-64, and Cys-56-Cys-77.

This sequence belongs to the venom Kunitz-type family. Expressed by the venom gland.

The protein resides in the secreted. Functionally, serine protease inhibitor. In Notechis scutatus scutatus (Mainland tiger snake), this protein is Kunitz-type serine protease inhibitor tigerin-2.